The sequence spans 81 residues: ATP synthase subunit c, chloroplastic (81 aa).

2 helical membrane-spanning segments follow: residues 3-23 (PLIS…ASIG) and 57-77 (LAFM…LLFA).

Belongs to the ATPase C chain family. In terms of assembly, F-type ATPases have 2 components, F(1) - the catalytic core - and F(0) - the membrane proton channel. F(1) has five subunits: alpha(3), beta(3), gamma(1), delta(1), epsilon(1). F(0) has four main subunits: a(1), b(1), b'(1) and c(10-14). The alpha and beta chains form an alternating ring which encloses part of the gamma chain. F(1) is attached to F(0) by a central stalk formed by the gamma and epsilon chains, while a peripheral stalk is formed by the delta, b and b' chains.

The protein localises to the plastid. It localises to the chloroplast thylakoid membrane. Its function is as follows. F(1)F(0) ATP synthase produces ATP from ADP in the presence of a proton or sodium gradient. F-type ATPases consist of two structural domains, F(1) containing the extramembraneous catalytic core and F(0) containing the membrane proton channel, linked together by a central stalk and a peripheral stalk. During catalysis, ATP synthesis in the catalytic domain of F(1) is coupled via a rotary mechanism of the central stalk subunits to proton translocation. Functionally, key component of the F(0) channel; it plays a direct role in translocation across the membrane. A homomeric c-ring of between 10-14 subunits forms the central stalk rotor element with the F(1) delta and epsilon subunits. This chain is ATP synthase subunit c, chloroplastic, found in Ceratophyllum demersum (Rigid hornwort).